The chain runs to 514 residues: Membrane-bound lytic murein transglycosylase F (514 aa).

Positions 1–30 (MKKLKINYLFIGILTLLLAAALWPSIPWFG) are cleaved as a signal peptide. Positions 31–269 (KTENHIAAIQ…RIEEKYLGHG (239 aa)) are non-LT domain. Positions 270-514 (DDFDYVDTRS…LFTPQKKEEK (245 aa)) are LT domain. The active site involves Glu-314.

The protein in the N-terminal section; belongs to the bacterial solute-binding protein 3 family. This sequence in the C-terminal section; belongs to the transglycosylase Slt family.

It localises to the cell outer membrane. It carries out the reaction Exolytic cleavage of the (1-&gt;4)-beta-glycosidic linkage between N-acetylmuramic acid (MurNAc) and N-acetylglucosamine (GlcNAc) residues in peptidoglycan, from either the reducing or the non-reducing ends of the peptidoglycan chains, with concomitant formation of a 1,6-anhydrobond in the MurNAc residue.. Murein-degrading enzyme that degrades murein glycan strands and insoluble, high-molecular weight murein sacculi, with the concomitant formation of a 1,6-anhydromuramoyl product. Lytic transglycosylases (LTs) play an integral role in the metabolism of the peptidoglycan (PG) sacculus. Their lytic action creates space within the PG sacculus to allow for its expansion as well as for the insertion of various structures such as secretion systems and flagella. This is Membrane-bound lytic murein transglycosylase F from Salmonella paratyphi B (strain ATCC BAA-1250 / SPB7).